A 419-amino-acid polypeptide reads, in one-letter code: MSFRSSSSYSLQSKGISGGGGYGAGFGGGSGAGFGGGSGAGFGGGYGAGFGGGASSGFSLSSAGGFGAAAASSSFSNFGGNDKQTMQNLNDRLASYLEKVRALEAANADLELKIREWYEKQKGSGIGAGSKDFSKYFEIISDLRNKILSATIDNSRVVLQIDNAKLAADDFRLKFENELALRQSVETDINGLRRVLDELTLARGDLEMQIESLTEELAYLKKNHEEEMSIAKSSSAGQVNVEMDAAPGIDLNKILSDMRADYETLAEKNRRDAELWFNQKSGELKKEIQTGVEQVQTSKSEINDLRRSLQSLEIELQSQLAMKKSLEDTLAETDGRYGAQLQTIQFSLRSLEEQLLQIRSDMERQNMEYRQLLDIKTRLEMEIETYRRLLEGEFGSLKSSIVQATEVSTSQSSSSSKKD.

Residues 1 to 81 (MSFRSSSSYS…SSSFSNFGGN (81 aa)) are head. Residues 82 to 117 (DKQTMQNLNDRLASYLEKVRALEAANADLELKIREW) are coil 1A. Residues 82–397 (DKQTMQNLND…RLLEGEFGSL (316 aa)) enclose the IF rod domain. The linker 1 stretch occupies residues 118–139 (YEKQKGSGIGAGSKDFSKYFEI). Residues 140-231 (ISDLRNKILS…KNHEEEMSIA (92 aa)) form a coil 1B region. Residues 232–254 (KSSSAGQVNVEMDAAPGIDLNKI) are linker 12. A coil 2 region spans residues 255-393 (LSDMRADYET…ETYRRLLEGE (139 aa)). Positions 394–419 (FGSLKSSIVQATEVSTSQSSSSSKKD) are tail.

It belongs to the intermediate filament family. Heterotetramer of two type I and two type II keratins.

The sequence is that of Keratin, type I cytoskeletal 47 kDa (xk81b2) from Xenopus laevis (African clawed frog).